Consider the following 653-residue polypeptide: Acetyl-coenzyme A synthetase 1 (653 aa).

CoA contacts are provided by residues 191–194 (RGGR), T311, and N335. ATP-binding positions include 387–389 (GEP), 411–416 (DTWWQT), D500, and R515. S523 lines the CoA pocket. Position 526 (R526) interacts with ATP. Positions 537, 539, and 542 each coordinate Mg(2+). R584 contributes to the CoA binding site. Residue K609 is modified to N6-acetyllysine.

It belongs to the ATP-dependent AMP-binding enzyme family. Mg(2+) is required as a cofactor. Post-translationally, acetylated. Deacetylation by the SIR2-homolog deacetylase activates the enzyme.

It catalyses the reaction acetate + ATP + CoA = acetyl-CoA + AMP + diphosphate. In terms of biological role, catalyzes the conversion of acetate into acetyl-CoA (AcCoA), an essential intermediate at the junction of anabolic and catabolic pathways. AcsA undergoes a two-step reaction. In the first half reaction, AcsA combines acetate with ATP to form acetyl-adenylate (AcAMP) intermediate. In the second half reaction, it can then transfer the acetyl group from AcAMP to the sulfhydryl group of CoA, forming the product AcCoA. The sequence is that of Acetyl-coenzyme A synthetase 1 from Pseudomonas putida (strain ATCC 47054 / DSM 6125 / CFBP 8728 / NCIMB 11950 / KT2440).